Consider the following 98-residue polypeptide: Ig heavy chain V region 6.96 (98 aa).

The region spanning 1-98 is the Ig-like domain; that stretch reads EVQLVESGGG…EDTAMYYCAR (98 aa).

This chain is Ig heavy chain V region 6.96, found in Mus musculus (Mouse).